A 313-amino-acid polypeptide reads, in one-letter code: Putative S-adenosyl-L-methionine-dependent methyltransferase MUL_0706 (313 aa).

S-adenosyl-L-methionine is bound by residues Asp132 and 161 to 162 (DL).

It belongs to the UPF0677 family.

Functionally, exhibits S-adenosyl-L-methionine-dependent methyltransferase activity. This is Putative S-adenosyl-L-methionine-dependent methyltransferase MUL_0706 from Mycobacterium ulcerans (strain Agy99).